Here is a 364-residue protein sequence, read N- to C-terminus: tRNA 2-selenouridine synthase (364 aa).

One can recognise a Rhodanese domain in the interval 14-137 (LIADTPIIDV…LRQTAIQATI (124 aa)). Cys-97 functions as the S-selanylcysteine intermediate in the catalytic mechanism.

It belongs to the SelU family. Monomer.

It carries out the reaction 5-methylaminomethyl-2-thiouridine(34) in tRNA + selenophosphate + (2E)-geranyl diphosphate + H2O + H(+) = 5-methylaminomethyl-2-selenouridine(34) in tRNA + (2E)-thiogeraniol + phosphate + diphosphate. The catalysed reaction is 5-methylaminomethyl-2-thiouridine(34) in tRNA + (2E)-geranyl diphosphate = 5-methylaminomethyl-S-(2E)-geranyl-thiouridine(34) in tRNA + diphosphate. The enzyme catalyses 5-methylaminomethyl-S-(2E)-geranyl-thiouridine(34) in tRNA + selenophosphate + H(+) = 5-methylaminomethyl-2-(Se-phospho)selenouridine(34) in tRNA + (2E)-thiogeraniol. It catalyses the reaction 5-methylaminomethyl-2-(Se-phospho)selenouridine(34) in tRNA + H2O = 5-methylaminomethyl-2-selenouridine(34) in tRNA + phosphate. Involved in the post-transcriptional modification of the uridine at the wobble position (U34) of tRNA(Lys), tRNA(Glu) and tRNA(Gln). Catalyzes the conversion of 2-thiouridine (S2U-RNA) to 2-selenouridine (Se2U-RNA). Acts in a two-step process involving geranylation of 2-thiouridine (S2U) to S-geranyl-2-thiouridine (geS2U) and subsequent selenation of the latter derivative to 2-selenouridine (Se2U) in the tRNA chain. The polypeptide is tRNA 2-selenouridine synthase (Shigella dysenteriae serotype 1 (strain Sd197)).